An 83-amino-acid polypeptide reads, in one-letter code: Small ribosomal subunit protein bS16 (83 aa).

Belongs to the bacterial ribosomal protein bS16 family.

The sequence is that of Small ribosomal subunit protein bS16 from Herminiimonas arsenicoxydans.